We begin with the raw amino-acid sequence, 299 residues long: Putative transposase InsZ (299 aa).

Residues 276 to 291 show a composition bias toward basic residues; sequence PSRPRSVKISKTRYPV. The interval 276 to 299 is disordered; sequence PSRPRSVKISKTRYPVKHSAAPLK.

The protein is Putative transposase InsZ (insZ) of Escherichia coli (strain K12).